The following is a 150-amino-acid chain: Con-Ins Im1 (150 aa).

The signal sequence occupies residues 1–25 (MATSLLSPLLVAMLGFLLHVHVARA). Disulfide bonds link Cys31/Cys133, Cys46/Cys136, Cys58/Cys149, and Cys135/Cys140. Residues 64-111 (GYAGGQRQLRKRTSMIDSDDMEAEGGSRGGFLMSKRRALSYLQKETNP) constitute a propeptide, c peptide. At Glu144 the chain carries 4-carboxyglutamate; partial.

Belongs to the insulin family. Heterodimer of A and B chains; disulfide-linked. As to expression, expressed by the venom gland.

Its subcellular location is the secreted. Functionally, this venom insulin facilitates prey capture by rapidly inducing hypoglycemic shock. Intraperitoneal injection of this peptide into zebrafish lowers blood glucose with the same potency than human insulin. In vivo, when applied to water, this peptide reduces overall locomotor activity of zebrafish larvae, observed as a significant decrease in the percentage of time spent swimming and movement frequency. This chain is Con-Ins Im1, found in Conus imperialis (Imperial cone).